The primary structure comprises 274 residues: Bis(5'-nucleosyl)-tetraphosphatase, symmetrical (274 aa).

This sequence belongs to the Ap4A hydrolase family.

The catalysed reaction is P(1),P(4)-bis(5'-adenosyl) tetraphosphate + H2O = 2 ADP + 2 H(+). In terms of biological role, hydrolyzes diadenosine 5',5'''-P1,P4-tetraphosphate to yield ADP. The sequence is that of Bis(5'-nucleosyl)-tetraphosphatase, symmetrical from Buchnera aphidicola subsp. Acyrthosiphon pisum (strain 5A).